Reading from the N-terminus, the 348-residue chain is NADH-ubiquinone oxidoreductase chain 2 (348 aa).

The next 11 helical transmembrane spans lie at Met1–Ser21, Trp23–Phe43, Tyr56–Phe76, Ile92–Leu112, Met123–Ser143, Asn148–Leu168, Leu176–Ala196, Leu198–Ile218, Cys242–Leu262, Ser272–Leu292, and Leu321–Ile341.

Belongs to the complex I subunit 2 family.

The protein resides in the mitochondrion inner membrane. The catalysed reaction is a ubiquinone + NADH + 5 H(+)(in) = a ubiquinol + NAD(+) + 4 H(+)(out). Its function is as follows. Core subunit of the mitochondrial membrane respiratory chain NADH dehydrogenase (Complex I) that is believed to belong to the minimal assembly required for catalysis. Complex I functions in the transfer of electrons from NADH to the respiratory chain. The immediate electron acceptor for the enzyme is believed to be ubiquinone. This chain is NADH-ubiquinone oxidoreductase chain 2 (MT-ND2), found in Myxine glutinosa (Atlantic hagfish).